A 360-amino-acid polypeptide reads, in one-letter code: Protein phosphatase 1 regulatory subunit 7 (360 aa).

Positions 1-64 are disordered; it reads MAAERGAGQQ…GEEDPEEEHE (64 aa). Ala-2 carries the post-translational modification N-acetylalanine. Ser-12, Ser-24, Ser-27, Ser-44, and Ser-47 each carry phosphoserine. The span at 17-34 shows a compositional bias: basic and acidic residues; the sequence is EVDRRVESEESGDEEGKK. The segment covering 53–63 has biased composition (acidic residues); it reads ERGEEDPEEEH. LRR repeat units follow at residues 77–98, 99–120, 121–142, 143–164, 165–186, 187–208, 209–230, 231–252, 253–274, 275–296, and 297–318; these read DAEDVDLNHYRIGKIEGFEVLK, KVKTLCLRQNLIKCIENLEELQ, SLRELDLYDNQIKKIENLEALT, ELEILDISFNLLRNIEGVDKLT, RLKKLFLVNNKISKIENLSNLH, QLQMLELGSNRIRAIENIDTLT, NLESLFLGKNKITKLQNLDALT, NLTVLSMQSNRLTKIEGLQNLV, NLRELYLSHNGIEVIEGLENNN, KLTMLDIASNRIKKIENISHLT, and ELQEFWMNDNLLESWSDLDELK. Ser-322 bears the Phosphoserine mark. Positions 331-360 constitute an LRRCT domain; sequence NPLQKDPQYRRKVMLALPSVRQIDATFVRF.

The protein belongs to the SDS22 family. In terms of assembly, interacts with PPP1CA, PPP1CB and PPP1CC/PPP1G isoform 1. Widely expressed.

It localises to the nucleus. Functionally, regulatory subunit of protein phosphatase 1. In Homo sapiens (Human), this protein is Protein phosphatase 1 regulatory subunit 7 (PPP1R7).